Consider the following 73-residue polypeptide: V-type proton ATPase subunit e (73 aa).

Residues 1–3 (MSS) lie on the Lumenal side of the membrane. The chain crosses the membrane as a helical span at residues 4–24 (FYTVVGVFIVVSAMSVLFWIM). Residues 25 to 35 (APKNNQAVWRS) are Cytoplasmic-facing. A helical membrane pass occupies residues 36 to 56 (TVILTLAMMFLMWAITFLCQL). The Lumenal portion of the chain corresponds to 57–73 (HPLVAPRRSDLRPEFAE).

Belongs to the V-ATPase e1/e2 subunit family. V-ATPase is a heteromultimeric enzyme composed of a peripheral catalytic V1 complex (components A to H) attached to an integral membrane V0 proton pore complex (components: a, c, c', c'', d, e, f and VOA1).

The protein resides in the vacuole membrane. Subunit of the V0 complex of vacuolar(H+)-ATPase (V-ATPase), a multisubunit enzyme composed of a peripheral complex (V1) that hydrolyzes ATP and a membrane integral complex (V0) that translocates protons. V-ATPase is responsible for acidifying and maintaining the pH of intracellular compartments. The chain is V-type proton ATPase subunit e (VMA9) from Saccharomyces cerevisiae (strain ATCC 204508 / S288c) (Baker's yeast).